A 326-amino-acid chain; its full sequence is Cytosolic Fe-S cluster assembly factor NBP35 (326 aa).

Positions 1–38 (MTEIANGQQILPPDYTLKEPEPEHCPGPESENAGKGDS) are disordered. A compositionally biased stretch (basic and acidic residues) spans 16–26 (TLKEPEPEHCP). Positions 25, 39, 42, and 48 each coordinate [4Fe-4S] cluster. 78–85 (GKGGVGKS) is a binding site for ATP. [4Fe-4S] cluster contacts are provided by Cys-251 and Cys-254.

Belongs to the Mrp/NBP35 ATP-binding proteins family. NUBP1/NBP35 subfamily. In terms of assembly, heterotetramer of 2 NBP35 and 2 CFD1 chains. [4Fe-4S] cluster serves as cofactor.

The protein localises to the cytoplasm. Its subcellular location is the nucleus. Functionally, component of the cytosolic iron-sulfur (Fe/S) protein assembly (CIA) machinery. Required for maturation of extramitochondrial Fe-S proteins. The NBP35-CFD1 heterotetramer forms a Fe-S scaffold complex, mediating the de novo assembly of an Fe-S cluster and its transfer to target apoproteins. Required for biogenesis and export of both ribosomal subunits, which may reflect a role in assembly of the Fe/S clusters in RLI1, a protein which performs rRNA processing and ribosome export. This is Cytosolic Fe-S cluster assembly factor NBP35 from Kluyveromyces lactis (strain ATCC 8585 / CBS 2359 / DSM 70799 / NBRC 1267 / NRRL Y-1140 / WM37) (Yeast).